A 515-amino-acid polypeptide reads, in one-letter code: Tyrosine decarboxylase 1 (515 aa).

Repeat copies occupy residues 81-138 (DDIT…TELE) and 141-192 (VTDW…GKDQ). Positions 81-192 (DDITNHIVPG…KVLNKIGKDQ (112 aa)) are 2 X approximate tandem repeats. A105 lines the substrate pocket. Pyridoxal 5'-phosphate is bound by residues T169 and C170. H205 is a binding site for substrate. Pyridoxal 5'-phosphate is bound by residues T264 and N318. At K321 the chain carries N6-(pyridoxal phosphate)lysine.

The protein belongs to the group II decarboxylase family. Pyridoxal 5'-phosphate is required as a cofactor. As to expression, mostly expressed in bulbs, and, to a lower extent, in stems, roots, leaves and flowers.

The catalysed reaction is L-tyrosine + H(+) = tyramine + CO2. Its pathway is alkaloid biosynthesis. In terms of biological role, catalyzes the decarboxylation of L-tyrosine to tyramine, which is converted to norbelladine, a precursor to all Amaryllidaceae alkaloids such as galanthamine, lycorine and haemanthamine, and including haemanthamine- and crinamine-type alkaloids, promising anticancer agents. The polypeptide is Tyrosine decarboxylase 1 (Narcissus pseudonarcissus (Daffodil)).